Reading from the N-terminus, the 155-residue chain is Small ribosomal subunit protein uS7c (155 aa).

Belongs to the universal ribosomal protein uS7 family. In terms of assembly, part of the 30S ribosomal subunit.

The protein localises to the plastid. Its function is as follows. One of the primary rRNA binding proteins, it binds directly to 16S rRNA where it nucleates assembly of the head domain of the 30S subunit. The chain is Small ribosomal subunit protein uS7c (rps7) from Lathraea clandestina (Purple toothwort).